The following is a 91-amino-acid chain: Small ribosomal subunit protein uS19 (91 aa).

This sequence belongs to the universal ribosomal protein uS19 family.

In terms of biological role, protein S19 forms a complex with S13 that binds strongly to the 16S ribosomal RNA. In Pseudomonas putida (strain ATCC 700007 / DSM 6899 / JCM 31910 / BCRC 17059 / LMG 24140 / F1), this protein is Small ribosomal subunit protein uS19.